The primary structure comprises 377 residues: Membrane protein MLC1 (377 aa).

Residues 1 to 23 (MTQEPFREELAYDRMPTLERGRQ) show a composition bias toward basic and acidic residues. The tract at residues 1-36 (MTQEPFREELAYDRMPTLERGRQDPASYAPDAKPSD) is disordered. A run of 4 helical transmembrane segments spans residues 52-72 (WVFSVLMGSCLLVTSGFSLYL), 82-100 (YLRCAAGSCIPSAIVSFTV), 111-131 (FQILFVSTFAVTTTCLIWFGC), and 144-164 (FNLILLLLLELLMAATVIIAA). Phosphoserine occurs at positions 177 and 179. The next 4 helical transmembrane spans lie at 199–219 (SVVEVIAGISAVLGGIIALNV), 230–250 (VTFFWILVACFPSAIASHVAA), 257–277 (LVEVLIAISSLTSPLLFTASG), and 304–324 (LLLLLLLVLLLQAGLNTGTAI).

In terms of assembly, interacts with ATP1B1. Part of a complex containing ATP1B1, TRPV4, AQP4 and HEPACAM. In terms of tissue distribution, expressed in the brain, with highest levels found in the amygdala, nucleus caudatus, thalamus and hippocampus.

Its subcellular location is the membrane. It is found in the cell membrane. The protein localises to the cytoplasm. The protein resides in the perinuclear region. It localises to the endoplasmic reticulum. In terms of biological role, transmembrane protein mainly expressed in brain astrocytes that may play a role in transport across the blood-brain and brain-cerebrospinal fluid barriers. Regulates the response of astrocytes to hypo-osmosis by promoting calcium influx. May function as regulatory protein of membrane protein complexes such as ion channels. The chain is Membrane protein MLC1 from Homo sapiens (Human).